A 157-amino-acid polypeptide reads, in one-letter code: Endoribonuclease YbeY (157 aa).

3 residues coordinate Zn(2+): His-114, His-118, and His-124.

The protein belongs to the endoribonuclease YbeY family. The cofactor is Zn(2+).

Its subcellular location is the cytoplasm. Single strand-specific metallo-endoribonuclease involved in late-stage 70S ribosome quality control and in maturation of the 3' terminus of the 16S rRNA. This Yersinia pestis protein is Endoribonuclease YbeY.